We begin with the raw amino-acid sequence, 122 residues long: Large ribosomal subunit protein uL14c (122 aa).

Belongs to the universal ribosomal protein uL14 family. In terms of assembly, part of the 50S ribosomal subunit.

It is found in the plastid. The protein resides in the chloroplast. Functionally, binds to 23S rRNA. This is Large ribosomal subunit protein uL14c from Huperzia lucidula (Shining clubmoss).